A 571-amino-acid chain; its full sequence is Cationic amino acid transporter 8 (571 aa).

N-linked (GlcNAc...) asparagine glycosylation occurs at N35. 6 helical membrane-spanning segments follow: residues 39-59, 94-114, 117-137, 148-168, 177-197, and 217-237; these read FWLLVIIVIYTATSACIYFDW, SLYPITLAIHFTMSVFCGFLY, IGPKFTAIIGQMCNIMSWVFL, FLSFVFLGLGADTAFIPILTI, TFILTVVGAAASLSYAVPATL, and IFLILVPCLLVATFLLPLMPF. N-linked (GlcNAc...) asparagine glycans are attached at residues N298, N325, and N346. Residues 365–385 traverse the membrane as a helical segment; the sequence is LFFKVLLSYPSICIIVYFILF. N-linked (GlcNAc...) asparagine glycosylation is present at N386. 5 helical membrane passes run 405-425, 433-453, 461-481, 488-508, and 528-548; these read SIINIINILMPISCIPCIIFG, SAIIIILMNAFSALMHLTALI, VSAFLYMCVTSIYTSQIYCFI, VVFGKLLGFASLCGGLFSLLC, and VVLLLVIAFILMFLPLTVLYF.

This sequence belongs to the SLC43A transporter (TC 2.A.1.44) family.

It localises to the membrane. The catalysed reaction is L-arginine(in) = L-arginine(out). In terms of biological role, sodium-independent cationic amino acid transporter. Transports L-arginine, L-lysine, L-histidine and L-ornithine. The protein is Cationic amino acid transporter 8 of Plasmodium vivax (strain Salvador I).